A 642-amino-acid chain; its full sequence is Phosphomethylpyrimidine synthase (642 aa).

Substrate is bound by residues N235, M264, Y293, H329, 349–351, 390–393, and E429; these read SRG and DGLR. H433 contacts Zn(2+). Y456 contacts substrate. H497 is a Zn(2+) binding site. 3 residues coordinate [4Fe-4S] cluster: C577, C580, and C585.

Belongs to the ThiC family. In terms of assembly, homodimer. It depends on [4Fe-4S] cluster as a cofactor.

It catalyses the reaction 5-amino-1-(5-phospho-beta-D-ribosyl)imidazole + S-adenosyl-L-methionine = 4-amino-2-methyl-5-(phosphooxymethyl)pyrimidine + CO + 5'-deoxyadenosine + formate + L-methionine + 3 H(+). It functions in the pathway cofactor biosynthesis; thiamine diphosphate biosynthesis. Functionally, catalyzes the synthesis of the hydroxymethylpyrimidine phosphate (HMP-P) moiety of thiamine from aminoimidazole ribotide (AIR) in a radical S-adenosyl-L-methionine (SAM)-dependent reaction. The protein is Phosphomethylpyrimidine synthase of Alteromonas mediterranea (strain DSM 17117 / CIP 110805 / LMG 28347 / Deep ecotype).